Consider the following 349-residue polypeptide: 1-acylglycerol-3-phosphate O-acyltransferase ABHD5 (349 aa).

Ala-2 carries the N-acetylalanine modification. Residues 77–184 (PLVLLHGFGG…LVEPWGFPER (108 aa)) enclose the AB hydrolase-1 domain. A Phosphoserine modification is found at Ser-122. An HXXXXD motif motif is present at residues 327–332 (HYVYAD).

Belongs to the peptidase S33 family. ABHD4/ABHD5 subfamily. Interacts with ADRP, PLIN and PNPLA2. Interacts with PLIN5; promotes interaction with PNPLA2. As to expression, widely expressed in various tissues, including lymphocytes, liver, skeletal muscle and brain. Expressed by upper epidermal layers and dermal fibroblasts in skin, hepatocytes and neurons (at protein level).

Its subcellular location is the cytoplasm. It is found in the lipid droplet. The protein localises to the cytosol. The enzyme catalyses a 1-acyl-sn-glycero-3-phosphate + an acyl-CoA = a 1,2-diacyl-sn-glycero-3-phosphate + CoA. It catalyses the reaction 1-(9Z-octadecenoyl)-sn-glycero-3-phosphate + hexadecanoyl-CoA = 1-(9Z)-octadecenoyl-2-hexadecanoyl-sn-glycero-3-phosphate + CoA. The catalysed reaction is 1-(9Z-octadecenoyl)-sn-glycero-3-phosphate + octadecanoyl-CoA = 1-(9Z-octadecenoyl)-2-octadecanoyl-sn-glycero-3-phosphate + CoA. It carries out the reaction 1-(9Z-octadecenoyl)-sn-glycero-3-phosphate + (9Z)-octadecenoyl-CoA = 1,2-di-(9Z-octadecenoyl)-sn-glycero-3-phosphate + CoA. The enzyme catalyses 1-(9Z-octadecenoyl)-sn-glycero-3-phosphate + (5Z,8Z,11Z,14Z)-eicosatetraenoyl-CoA = 1-(9Z)-octadecenoyl-2-(5Z,8Z,11Z,14Z)-eicosatetraenoyl-sn-glycero-3-phosphate + CoA. It catalyses the reaction eicosanoyl-CoA + 1-(9Z-octadecenoyl)-sn-glycero-3-phosphate = 1-(9Z)-octadecenoyl-2-eicosanoyl-sn-glycero-3-phosphate + CoA. The catalysed reaction is 1-hexadecanoyl-sn-glycero-3-phosphate + (9Z)-octadecenoyl-CoA = 1-hexadecanoyl-2-(9Z-octadecenoyl)-sn-glycero-3-phosphate + CoA. It carries out the reaction 1-octadecanoyl-sn-glycero-3-phosphate + (9Z)-octadecenoyl-CoA = 1-octadecanoyl-2-(9Z-octadecenoyl)-sn-glycero-3-phosphate + CoA. The enzyme catalyses 1-(5Z,8Z,11Z,14Z-eicosatetraenoyl)-sn-glycero-3-phosphate + (9Z)-octadecenoyl-CoA = 1-(5Z,8Z,11Z,14Z)-eicosatetraenoyl-2-(9Z)-octadecenoyl-sn-glycero-3-phosphate + CoA. Its activity is regulated as follows. Acyltransferase activity is inhibited by detergents such as Triton X-100 and 3-[(3-cholamidopropyl)dimethylammonio]-1-propanesulfonate (CHAPS). Acyltransferase activity is inhibited by the presence of magnesium and calcium. In terms of biological role, coenzyme A-dependent lysophosphatidic acid acyltransferase that catalyzes the transfer of an acyl group on a lysophosphatidic acid. Functions preferentially with 1-oleoyl-lysophosphatidic acid followed by 1-palmitoyl-lysophosphatidic acid, 1-stearoyl-lysophosphatidic acid and 1-arachidonoyl-lysophosphatidic acid as lipid acceptor. Functions preferentially with arachidonoyl-CoA followed by oleoyl-CoA as acyl group donors. Functions in phosphatidic acid biosynthesis. May regulate the cellular storage of triacylglycerol through activation of the phospholipase PNPLA2. Involved in keratinocyte differentiation. Regulates lipid droplet fusion. The protein is 1-acylglycerol-3-phosphate O-acyltransferase ABHD5 of Homo sapiens (Human).